The chain runs to 162 residues: MQYVTPDLCDAYPELVQVVEPMFSNFGGRDSFGGEIVTIKCFEDNSLVKDQVDTDGKGKVLVVDGGGSLRRALLGDMLAEKAARNGWEGLVVYGCIRDVDVIAQTDLGVQALATHPMKTDKRGIGDLNVPVTFGGVTFRPGEYLYADNNGIIVSPQPLKMPE.

Substrate contacts are provided by residues 75-78 (GDML) and arginine 97. A divalent metal cation is bound at residue aspartate 98.

Belongs to the class II aldolase/RraA-like family. In terms of assembly, homotrimer. The cofactor is a divalent metal cation.

It carries out the reaction 4-hydroxy-4-methyl-2-oxoglutarate = 2 pyruvate. The enzyme catalyses oxaloacetate + H(+) = pyruvate + CO2. Functionally, catalyzes the aldol cleavage of 4-hydroxy-4-methyl-2-oxoglutarate (HMG) into 2 molecules of pyruvate. Also contains a secondary oxaloacetate (OAA) decarboxylase activity due to the common pyruvate enolate transition state formed following C-C bond cleavage in the retro-aldol and decarboxylation reactions. The chain is Putative 4-hydroxy-4-methyl-2-oxoglutarate aldolase from Azotobacter vinelandii (strain DJ / ATCC BAA-1303).